The primary structure comprises 487 residues: Serine/threonine-protein kinase 4 (487 aa).

M1 carries the N-acetylmethionine modification. T3 carries the phosphothreonine modification. The 252-residue stretch at 30-281 folds into the Protein kinase domain; that stretch reads FDVLEKLGEG…ATQLLQHPFV (252 aa). Residues 36 to 44 and K59 each bind ATP; that span reads LGEGSYGSV. The Proton acceptor role is filled by D149. T183 bears the Phosphothreonine; by autocatalysis mark. Residue S265 is modified to Phosphoserine. Residues 290–310 adopt a coiled-coil conformation; the sequence is LRDLINEAMDVKLKRQESQQR. The segment covering 303–312 has biased composition (basic and acidic residues); the sequence is KRQESQQREV. The interval 303-332 is disordered; it reads KRQESQQREVDQDDEENSEEDEMDSGTMVR. Residues 313 to 326 show a composition bias toward acidic residues; the sequence is DQDDEENSEEDEMD. The residue at position 320 (S320) is a Phosphoserine. A phosphothreonine mark is found at T340 and T367. Phosphothreonine; by PKB/AKT1 is present on T387. Phosphoserine is present on residues S410 and S414. Y433 bears the Phosphotyrosine mark. The 48-residue stretch at 433–480 folds into the SARAH domain; it reads YEFLKSWTVEDLQKRLLALDPMMEQEIEEIRQKYQSKRQPILDAIEAK.

Belongs to the protein kinase superfamily. STE Ser/Thr protein kinase family. STE20 subfamily. As to quaternary structure, homodimer; mediated via the coiled-coil region. Interacts with NORE1, which inhibits autoactivation. Interacts with and stabilizes SAV1. Interacts with RASSF1. Interacts with FOXO3. Interacts with RASSF2 (via SARAH domain). Interacts with AR, PKB/AKT1, TNNI3 and SIRT1. Interacts with DLG5 (via PDZ domain 3). Interacts with MARK3 and SCRIB in the presence of DLG5. The cofactor is Mg(2+). Post-translationally, autophosphorylated on serine and threonine residues. Phosphorylation at Thr-387 by PKB/AKT1, leads to inhibition of its: kinase activity, nuclear translocation and autophosphorylation at Thr-183. It also diminishes its cleavage by caspases and its ability to phosphorylate FOXO3. In terms of processing, proteolytically cleaved by caspase-3 during apoptosis at Asp-326 and Asp-349 resulting in a 37 kDa or a 39 kDa subunit respectively. The 39 kDa subunit is further cleaved into the 37 kDa form. Proteolytic cleavage results in kinase activation and nuclear translocation of the truncated form (MST1/N). It is less likely that cleavage at Asp-349 is a prerequisite for activation as this site is not conserved in the murine ortholog.

It is found in the cytoplasm. The protein localises to the nucleus. It carries out the reaction L-seryl-[protein] + ATP = O-phospho-L-seryl-[protein] + ADP + H(+). The enzyme catalyses L-threonyl-[protein] + ATP = O-phospho-L-threonyl-[protein] + ADP + H(+). Its activity is regulated as follows. Inhibited by the C-terminal non-catalytic region. Activated by caspase-cleavage. Full activation also requires homodimerization and autophosphorylation of Thr-183. Activated by RASSF1 which acts by preventing its dephosphorylation. In terms of biological role, stress-activated, pro-apoptotic kinase which, following caspase-cleavage, enters the nucleus and induces chromatin condensation followed by internucleosomal DNA fragmentation. Key component of the Hippo signaling pathway which plays a pivotal role in organ size control and tumor suppression by restricting proliferation and promoting apoptosis. The core of this pathway is composed of a kinase cascade wherein STK3/MST2 and STK4/MST1, in complex with its regulatory protein SAV1, phosphorylates and activates LATS1/2 in complex with its regulatory protein MOB1, which in turn phosphorylates and inactivates YAP1 oncoprotein and WWTR1/TAZ. Phosphorylation of YAP1 by LATS2 inhibits its translocation into the nucleus to regulate cellular genes important for cell proliferation, cell death, and cell migration. STK3/MST2 and STK4/MST1 are required to repress proliferation of mature hepatocytes, to prevent activation of facultative adult liver stem cells (oval cells), and to inhibit tumor formation. Phosphorylates 'Ser-14' of histone H2B (H2BS14ph) during apoptosis. Phosphorylates FOXO3 upon oxidative stress, which results in its nuclear translocation and cell death initiation. Phosphorylates MOBKL1A, MOBKL1B and RASSF2. Phosphorylates TNNI3 (cardiac Tn-I) and alters its binding affinity to TNNC1 (cardiac Tn-C) and TNNT2 (cardiac Tn-T). Phosphorylates FOXO1 on 'Ser-212' and regulates its activation and stimulates transcription of PMAIP1 in a FOXO1-dependent manner. Phosphorylates SIRT1 and inhibits SIRT1-mediated p53/TP53 deacetylation, thereby promoting p53/TP53 dependent transcription and apoptosis upon DNA damage. Acts as an inhibitor of PKB/AKT1. Phosphorylates AR on 'Ser-650' and suppresses its activity by intersecting with PKB/AKT1 signaling and antagonizing formation of AR-chromatin complexes. The polypeptide is Serine/threonine-protein kinase 4 (STK4) (Aotus nancymaae (Ma's night monkey)).